The following is a 609-amino-acid chain: Numb-like protein (609 aa).

Disordered stretches follow at residues M1 to A68, G223 to A283, A372 to S421, Q434 to P464, and A537 to L609. Residues P19 to P29 show a composition bias toward pro residues. The PID domain occupies R74–G223. 2 positions are modified to phosphoserine: S224 and S228. Residues P233–E245 are compositionally biased toward basic and acidic residues. Low complexity predominate over residues A246 to P259. The residue at position 263 (S263) is a Phosphoserine. A Phosphothreonine modification is found at T279. The span at T409–E418 shows a compositional bias: basic and acidic residues. Phosphoserine is present on S411. The span at Q434–Q446 shows a compositional bias: low complexity. Composition is skewed to pro residues over residues P454–P464 and N558–E573.

In terms of assembly, interacts (via PTB domain) with MAP3K7IP2 (via C-terminal). Interacts (via C-terminal) with TRAF6 (via TRAF domains). Associates with EPS15 and NOTCH1.

It localises to the cytoplasm. In terms of biological role, plays a role in the process of neurogenesis. Required throughout embryonic neurogenesis to maintain neural progenitor cells, also called radial glial cells (RGCs), by allowing their daughter cells to choose progenitor over neuronal cell fate. Not required for the proliferation of neural progenitor cells before the onset of embryonic neurogenesis. Also required postnatally in the subventricular zone (SVZ) neurogenesis by regulating SVZ neuroblasts survival and ependymal wall integrity. Negative regulator of NF-kappa-B signaling pathway. The inhibition of NF-kappa-B activation is mediated at least in part, by preventing MAP3K7IP2 to interact with polyubiquitin chains of TRAF6 and RIPK1 and by stimulating the 'Lys-48'-linked polyubiquitination and degradation of TRAF6 in cortical neurons. This Homo sapiens (Human) protein is Numb-like protein (NUMBL).